The chain runs to 421 residues: Imidazolonepropionase (421 aa).

Positions 81 and 83 each coordinate Fe(3+). Positions 81 and 83 each coordinate Zn(2+). 4-imidazolone-5-propanoate contacts are provided by R90, Y153, and H186. An N-formimidoyl-L-glutamate-binding site is contributed by Y153. H251 contacts Fe(3+). Position 251 (H251) interacts with Zn(2+). E254 contributes to the 4-imidazolone-5-propanoate binding site. Residue D326 coordinates Fe(3+). Residue D326 participates in Zn(2+) binding. N-formimidoyl-L-glutamate-binding residues include N328 and G330. S331 lines the 4-imidazolone-5-propanoate pocket.

The protein belongs to the metallo-dependent hydrolases superfamily. HutI family. Zn(2+) serves as cofactor. Fe(3+) is required as a cofactor.

Its subcellular location is the cytoplasm. The catalysed reaction is 4-imidazolone-5-propanoate + H2O = N-formimidoyl-L-glutamate. It functions in the pathway amino-acid degradation; L-histidine degradation into L-glutamate; N-formimidoyl-L-glutamate from L-histidine: step 3/3. Its function is as follows. Catalyzes the hydrolytic cleavage of the carbon-nitrogen bond in imidazolone-5-propanoate to yield N-formimidoyl-L-glutamate. It is the third step in the universal histidine degradation pathway. The polypeptide is Imidazolonepropionase (Streptococcus pyogenes serotype M6 (strain ATCC BAA-946 / MGAS10394)).